A 428-amino-acid polypeptide reads, in one-letter code: MRVVILGSGVVGVASAYYLARAGHEVTVIDREAGPALETSFANAGQISPGYAAPWAAPGVPLKAVKWMFEKHAPLAIRLDGTRFQLQWMYQMLRNCTAERYAVNKGRMVRLAEYSRDCLQALRADTGIQYEGRTGGTLQLFRTQQQLDGAAKDIAVLQEANVPFELLSPAELKKAEPALAAVSHKLTGGLRLPGDETGDCQLFTTRLAALAESLGVKFRYNTPIDALAIAGGKIAGVQCGSETVRADAYVVALGSYSTSFISNLMKVPVYPLKGYSITAPIVNEAAAPVSTVLDETYKIAITRFDQRIRVGGMAEIVGFDKKLRAARRETLEMCVNDLFPGGGDTSKATFWTGLRPMTPDGTPIVGRTPVSNLFLNTGHGTLGWTMSCGSGQLLADLISGKMPAIQADDLSVHRYLKDVPGQTRPAYA.

Position 3-17 (3-17 (VVILGSGVVGVASAY)) interacts with FAD.

It belongs to the DadA oxidoreductase family. FAD is required as a cofactor.

It carries out the reaction a D-alpha-amino acid + A + H2O = a 2-oxocarboxylate + AH2 + NH4(+). It functions in the pathway amino-acid degradation; D-alanine degradation; NH(3) and pyruvate from D-alanine: step 1/1. Oxidative deamination of D-amino acids. The sequence is that of D-amino acid dehydrogenase from Burkholderia cenocepacia (strain ATCC BAA-245 / DSM 16553 / LMG 16656 / NCTC 13227 / J2315 / CF5610) (Burkholderia cepacia (strain J2315)).